We begin with the raw amino-acid sequence, 285 residues long: uncharacterized protein (285 aa).

A signal peptide spans 1 to 25 (MVKKWLIQFAVMLSVLSTFTYSASA).

This is an uncharacterized protein from Bacillus subtilis (strain 168).